A 284-amino-acid chain; its full sequence is Bifunctional protein FolD (284 aa).

NADP(+) contacts are provided by residues 164–166 (GRS) and Ser189.

The protein belongs to the tetrahydrofolate dehydrogenase/cyclohydrolase family. As to quaternary structure, homodimer.

The catalysed reaction is (6R)-5,10-methylene-5,6,7,8-tetrahydrofolate + NADP(+) = (6R)-5,10-methenyltetrahydrofolate + NADPH. It carries out the reaction (6R)-5,10-methenyltetrahydrofolate + H2O = (6R)-10-formyltetrahydrofolate + H(+). It participates in one-carbon metabolism; tetrahydrofolate interconversion. In terms of biological role, catalyzes the oxidation of 5,10-methylenetetrahydrofolate to 5,10-methenyltetrahydrofolate and then the hydrolysis of 5,10-methenyltetrahydrofolate to 10-formyltetrahydrofolate. The chain is Bifunctional protein FolD from Listeria monocytogenes serotype 4b (strain F2365).